A 728-amino-acid polypeptide reads, in one-letter code: 1,4-alpha-glucan branching enzyme GlgB (728 aa).

Residue aspartate 405 is the Nucleophile of the active site. Glutamate 458 serves as the catalytic Proton donor.

The protein belongs to the glycosyl hydrolase 13 family. GlgB subfamily. In terms of assembly, monomer.

It catalyses the reaction Transfers a segment of a (1-&gt;4)-alpha-D-glucan chain to a primary hydroxy group in a similar glucan chain.. It functions in the pathway glycan biosynthesis; glycogen biosynthesis. Functionally, catalyzes the formation of the alpha-1,6-glucosidic linkages in glycogen by scission of a 1,4-alpha-linked oligosaccharide from growing alpha-1,4-glucan chains and the subsequent attachment of the oligosaccharide to the alpha-1,6 position. This Shigella dysenteriae serotype 1 (strain Sd197) protein is 1,4-alpha-glucan branching enzyme GlgB.